A 334-amino-acid chain; its full sequence is Holliday junction branch migration complex subunit RuvB (334 aa).

Residues 1-180 are large ATPase domain (RuvB-L); sequence MSEFLTPERT…FGIILELDFY (180 aa). ATP is bound by residues Leu-19, Arg-20, Gly-61, Lys-64, Thr-65, Thr-66, 127 to 129, Arg-170, Tyr-180, and Arg-217; that span reads EDF. Thr-65 is a binding site for Mg(2+). A small ATPAse domain (RuvB-S) region spans residues 181-251; it reads TVKELKEIIK…IVLKTMEVLN (71 aa). The interval 254-334 is head domain (RuvB-H); that stretch reads AEGLDEFDRK…KYEVPENRLF (81 aa). 2 residues coordinate DNA: Arg-309 and Arg-314.

It belongs to the RuvB family. As to quaternary structure, homohexamer. Forms an RuvA(8)-RuvB(12)-Holliday junction (HJ) complex. HJ DNA is sandwiched between 2 RuvA tetramers; dsDNA enters through RuvA and exits via RuvB. An RuvB hexamer assembles on each DNA strand where it exits the tetramer. Each RuvB hexamer is contacted by two RuvA subunits (via domain III) on 2 adjacent RuvB subunits; this complex drives branch migration. In the full resolvosome a probable DNA-RuvA(4)-RuvB(12)-RuvC(2) complex forms which resolves the HJ.

The protein localises to the cytoplasm. It carries out the reaction ATP + H2O = ADP + phosphate + H(+). The RuvA-RuvB-RuvC complex processes Holliday junction (HJ) DNA during genetic recombination and DNA repair, while the RuvA-RuvB complex plays an important role in the rescue of blocked DNA replication forks via replication fork reversal (RFR). RuvA specifically binds to HJ cruciform DNA, conferring on it an open structure. The RuvB hexamer acts as an ATP-dependent pump, pulling dsDNA into and through the RuvAB complex. RuvB forms 2 homohexamers on either side of HJ DNA bound by 1 or 2 RuvA tetramers; 4 subunits per hexamer contact DNA at a time. Coordinated motions by a converter formed by DNA-disengaged RuvB subunits stimulates ATP hydrolysis and nucleotide exchange. Immobilization of the converter enables RuvB to convert the ATP-contained energy into a lever motion, pulling 2 nucleotides of DNA out of the RuvA tetramer per ATP hydrolyzed, thus driving DNA branch migration. The RuvB motors rotate together with the DNA substrate, which together with the progressing nucleotide cycle form the mechanistic basis for DNA recombination by continuous HJ branch migration. Branch migration allows RuvC to scan DNA until it finds its consensus sequence, where it cleaves and resolves cruciform DNA. This is Holliday junction branch migration complex subunit RuvB from Thermotoga petrophila (strain ATCC BAA-488 / DSM 13995 / JCM 10881 / RKU-1).